An 84-amino-acid polypeptide reads, in one-letter code: RNA-binding protein Hfq (84 aa).

In terms of domain architecture, Sm spans 10 to 70; the sequence is DLFLNVLRRD…ISTIMPFRPV (61 aa).

It belongs to the Hfq family. Homohexamer.

RNA chaperone that binds small regulatory RNA (sRNAs) and mRNAs to facilitate mRNA translational regulation in response to envelope stress, environmental stress and changes in metabolite concentrations. Also binds with high specificity to tRNAs. This chain is RNA-binding protein Hfq, found in Moorella thermoacetica (strain ATCC 39073 / JCM 9320).